A 427-amino-acid chain; its full sequence is Glucose-6-phosphate isomerase (427 aa).

The Proton donor role is filled by Glu-277. Residues His-298 and Lys-414 contribute to the active site.

This sequence belongs to the GPI family.

It is found in the cytoplasm. It carries out the reaction alpha-D-glucose 6-phosphate = beta-D-fructose 6-phosphate. The protein operates within carbohydrate biosynthesis; gluconeogenesis. It participates in carbohydrate degradation; glycolysis; D-glyceraldehyde 3-phosphate and glycerone phosphate from D-glucose: step 2/4. In terms of biological role, catalyzes the reversible isomerization of glucose-6-phosphate to fructose-6-phosphate. The protein is Glucose-6-phosphate isomerase of Mycoplasma capricolum subsp. capricolum (strain California kid / ATCC 27343 / NCTC 10154).